The following is a 471-amino-acid chain: Adenosylhomocysteinase (471 aa).

Residues Thr58, Asp133, and Glu195 each contribute to the substrate site. NAD(+) is bound at residue 196-198; sequence TTT. Positions 225 and 229 each coordinate substrate. NAD(+)-binding positions include Asn230, 259–264, Glu282, Asn317, 338–340, and Asn383; these read GFGDVG and IGH.

Belongs to the adenosylhomocysteinase family. NAD(+) serves as cofactor.

It localises to the cytoplasm. The catalysed reaction is S-adenosyl-L-homocysteine + H2O = L-homocysteine + adenosine. It functions in the pathway amino-acid biosynthesis; L-homocysteine biosynthesis; L-homocysteine from S-adenosyl-L-homocysteine: step 1/1. Its function is as follows. May play a key role in the regulation of the intracellular concentration of adenosylhomocysteine. This is Adenosylhomocysteinase from Rhodopseudomonas palustris (strain BisB5).